A 292-amino-acid chain; its full sequence is NAD kinase (292 aa).

The active-site Proton acceptor is D74. NAD(+) is bound by residues 74–75 (DG), 147–148 (NE), D177, and 188–193 (TGYSLS).

It belongs to the NAD kinase family. A divalent metal cation is required as a cofactor.

It localises to the cytoplasm. The enzyme catalyses NAD(+) + ATP = ADP + NADP(+) + H(+). Functionally, involved in the regulation of the intracellular balance of NAD and NADP, and is a key enzyme in the biosynthesis of NADP. Catalyzes specifically the phosphorylation on 2'-hydroxyl of the adenosine moiety of NAD to yield NADP. This chain is NAD kinase, found in Cytophaga hutchinsonii (strain ATCC 33406 / DSM 1761 / CIP 103989 / NBRC 15051 / NCIMB 9469 / D465).